The chain runs to 485 residues: Regulatory protein ViaA (485 aa).

This sequence belongs to the ViaA family. As to quaternary structure, homodimer. Interacts with RavA.

The protein localises to the cytoplasm. In terms of biological role, component of the RavA-ViaA chaperone complex, which may act on the membrane to optimize the function of some of the respiratory chains. ViaA stimulates the ATPase activity of RavA. The protein is Regulatory protein ViaA of Photorhabdus laumondii subsp. laumondii (strain DSM 15139 / CIP 105565 / TT01) (Photorhabdus luminescens subsp. laumondii).